Consider the following 334-residue polypeptide: ATP-dependent kinase YFH7 (334 aa).

Position 30-38 (30-38 (GHPGSGKST)) interacts with ATP.

The protein belongs to the YFH7 family.

Its function is as follows. ATP-dependent kinase that could be involved in endoplasmic reticulum membrane assembly. The chain is ATP-dependent kinase YFH7 (YFH7) from Eremothecium gossypii (strain ATCC 10895 / CBS 109.51 / FGSC 9923 / NRRL Y-1056) (Yeast).